We begin with the raw amino-acid sequence, 201 residues long: 3-isopropylmalate dehydratase small subunit (201 aa).

This sequence belongs to the LeuD family. LeuD type 1 subfamily. In terms of assembly, heterodimer of LeuC and LeuD.

It carries out the reaction (2R,3S)-3-isopropylmalate = (2S)-2-isopropylmalate. It participates in amino-acid biosynthesis; L-leucine biosynthesis; L-leucine from 3-methyl-2-oxobutanoate: step 2/4. Functionally, catalyzes the isomerization between 2-isopropylmalate and 3-isopropylmalate, via the formation of 2-isopropylmaleate. This chain is 3-isopropylmalate dehydratase small subunit, found in Allorhizobium ampelinum (strain ATCC BAA-846 / DSM 112012 / S4) (Agrobacterium vitis (strain S4)).